The following is a 337-amino-acid chain: UDP-3-O-acylglucosamine N-acyltransferase (337 aa).

The Proton acceptor role is filled by histidine 238.

The protein belongs to the transferase hexapeptide repeat family. LpxD subfamily. In terms of assembly, homotrimer.

The catalysed reaction is a UDP-3-O-[(3R)-3-hydroxyacyl]-alpha-D-glucosamine + a (3R)-hydroxyacyl-[ACP] = a UDP-2-N,3-O-bis[(3R)-3-hydroxyacyl]-alpha-D-glucosamine + holo-[ACP] + H(+). It participates in bacterial outer membrane biogenesis; LPS lipid A biosynthesis. In terms of biological role, catalyzes the N-acylation of UDP-3-O-acylglucosamine using 3-hydroxyacyl-ACP as the acyl donor. Is involved in the biosynthesis of lipid A, a phosphorylated glycolipid that anchors the lipopolysaccharide to the outer membrane of the cell. The protein is UDP-3-O-acylglucosamine N-acyltransferase of Xanthomonas oryzae pv. oryzae (strain MAFF 311018).